The sequence spans 259 residues: BTB/POZ domain-containing protein KCTD4 (259 aa).

A disordered region spans residues 1-25 (MERKINRREKEKEYEGKHNSLEDTD). One can recognise a BTB domain in the interval 33-134 (TLMTLNVGGY…EVKSRWEKEQ (102 aa)).

In Homo sapiens (Human), this protein is BTB/POZ domain-containing protein KCTD4 (KCTD4).